Reading from the N-terminus, the 308-residue chain is Protein doublecortin (308 aa).

In terms of domain architecture, Doublecortin 1 spans 21 to 104 (ARVILFRNGD…AEPLNTEVIP (84 aa)). A disordered region spans residues 115–167 (EVSDQDDEPKPSKPFVSSVPPPPTPTPTSSSGTTTTSQPTLSASPSVSSAQSP). The segment covering 141-167 (PTSSSGTTTTSQPTLSASPSVSSAQSP) has biased composition (low complexity). The Doublecortin 2 domain occupies 194-277 (KVIMCFRNGD…GETLNPLDFS (84 aa)). The tract at residues 282–308 (EHVKQKKLQEQQQQASEQQKPQEQEIF) is disordered. The segment covering 291–300 (EQQQQASEQQ) has biased composition (low complexity).

In terms of assembly, interacts with lis1.

Its subcellular location is the cytoplasm. It is found in the cytoskeleton. In terms of biological role, has a cytoskeleton-independent function in chemotactic signaling during development. The protein is Protein doublecortin (dcx) of Dictyostelium discoideum (Social amoeba).